The following is a 147-amino-acid chain: uncharacterized protein (147 aa).

Residues 63-79 form a helical membrane-spanning segment; the sequence is LFIVACSAVFATIAYIN.

It belongs to the FUN14 family.

The protein localises to the membrane. This is an uncharacterized protein from Schizosaccharomyces pombe (strain 972 / ATCC 24843) (Fission yeast).